A 409-amino-acid chain; its full sequence is 2-methylfumaryl-CoA isomerase (409 aa).

Residue D165 is the Nucleophile of the active site.

This sequence belongs to the CoA-transferase III family. Mesaconyl-CoA isomerase subfamily. Homodimer.

It carries out the reaction 2-methylfumaryl-CoA = 3-methylfumaryl-CoA. With respect to regulation, partially inhibited by hydroxylamine. In terms of biological role, involved in the glyoxylate assimilation cycle used to regenerate acetyl-CoA and produce pyruvate as universal precursor for biosynthesis. This reaction involves an intramolecular CoA transferase that catalyzes the reversible transfer of the CoA moiety from the C1-carboxyl group of mesaconyl-CoA to the C4-carboxyl group. It does not require free mesaconate as CoA acceptor. The polypeptide is 2-methylfumaryl-CoA isomerase (mct) (Chloroflexus aurantiacus (strain ATCC 29366 / DSM 635 / J-10-fl)).